A 308-amino-acid polypeptide reads, in one-letter code: Cysteine synthase (308 aa).

Residue K45 is modified to N6-(pyridoxal phosphate)lysine. Pyridoxal 5'-phosphate contacts are provided by residues N75, 179–183 (GTGGT), and S267.

It belongs to the cysteine synthase/cystathionine beta-synthase family. In terms of assembly, homodimer. Forms CymR(2):CysK(2) or CymR(4):CysK(4) complexes in the absence of O-acetylserine. Requires pyridoxal 5'-phosphate as cofactor.

It carries out the reaction O-acetyl-L-serine + hydrogen sulfide = L-cysteine + acetate. The protein operates within amino-acid biosynthesis; L-cysteine biosynthesis; L-cysteine from L-serine: step 2/2. Functionally, catalyzes the conversion of O-acetylserine to cysteine. Also acts as a sensor of cysteine availability in the signal transduction pathway modulating CymR activity. When cysteine is present, the pool of O-acetylserine (OAS) is low, which leads to the formation of a CymR-CysK complex and transcriptional repression of the CymR regulon occurs. In the absence of cysteine, the OAS pool is high and the CymR-CysK complex is mostly dissociated, leading to a faster dissociation of CymR from its DNA targets and the lifting of CymR-dependent repression. This Bacillus subtilis (strain 168) protein is Cysteine synthase (cysK).